A 1029-amino-acid polypeptide reads, in one-letter code: Protein phosphatase 1 regulatory subunit 12A (1029 aa).

The KVKF motif signature appears at 35–38 (KVKF). ANK repeat units lie at residues 39 to 68 (DDGA…DINY), 72 to 101 (DGLT…NINQ), 105 to 134 (EGWI…HVGA), 138 to 164 (EGDT…RQGV), 198 to 227 (SGGT…DVNI), and 231 to 260 (DGWT…DMET). A (3S)-3-hydroxyasparagine; by HIF1AN mark is found at asparagine 67 and asparagine 100. (3S)-3-hydroxyasparagine; by HIF1AN is present on asparagine 226. The segment at 290–786 (LHSEKRDKKS…APSSSSLSTL (497 aa)) is disordered. Residues 291-300 (HSEKRDKKSP) are compositionally biased toward basic and acidic residues. A Phosphoserine modification is found at serine 299. The span at 302-314 (IESTANMENNQPQ) shows a compositional bias: polar residues. The segment covering 318–353 (KNKETLIIEPEKNASRIESLEHEKADEEEEGKKDES) has biased composition (basic and acidic residues). The span at 357-369 (SEEDEEDDSESEA) shows a compositional bias: acidic residues. Positions 385–402 (TSSTQAAPAAVTAPTLSS) are enriched in low complexity. Phosphoserine is present on residues serine 422 and serine 432. A compositionally biased stretch (basic and acidic residues) spans 422–432 (SPKEEERKDES). A Phosphothreonine modification is found at threonine 443. Serine 445 is subject to Phosphoserine; by NUAK1. At tyrosine 446 the chain carries Phosphotyrosine. The segment covering 469 to 480 (RSASSPRLSSSL) has biased composition (low complexity). Phosphoserine; by NUAK1 is present on serine 472. Serine 473 bears the Phosphoserine; by CDK1 mark. Serine 477 is modified (phosphoserine). Basic and acidic residues predominate over residues 481–491 (DNKEKEKDNKG). Residues serine 507 and serine 509 each carry the phosphoserine modification. Residues 540-551 (NSSINEGSTYHR) show a composition bias toward polar residues. Residues 564–578 (SCSVPSTTSTPTVTS) show a composition bias toward low complexity. Positions 585 to 594 (SLPSSTSTAA) are enriched in polar residues. The segment covering 596-610 (TPPGSSSAGTQSSTS) has biased composition (low complexity). Serine 601 and serine 618 each carry phosphoserine. A compositionally biased stretch (basic and acidic residues) spans 614-625 (WAEDSTEKEKDS). Low complexity predominate over residues 626–656 (APTAVTIPVAPTVVNAAAPSTTTLTTTTAGT). Residues 671-680 (VRDEESESQR) are compositionally biased toward basic and acidic residues. An interaction with ROCK2 region spans residues 680-863 (RKARSRQARQ…VSFWTQDSDE (184 aa)). The span at 681–691 (KARSRQARQSR) shows a compositional bias: basic residues. Residues serine 690 and serine 693 each carry the phosphoserine; by PKA and PKG; in vitro modification. Threonine 694 carries the phosphothreonine; by ROCK1, ROCK2, CDC42BP, ZIPK/DAPK3 and RAF1 modification. Residues 716-765 (RTREQENEEKEKEEKEKQDKEKQEEKKESEASREDEYKQKYSRTYDETYT) are compositionally biased toward basic and acidic residues. Positions 771-786 (STSSSSAPSSSSLSTL) are enriched in low complexity. Position 801 is a phosphoserine (serine 801). Residues 808–927 (AYSRGLAKEN…PYSSRLEKDD (120 aa)) form a disordered region. Residues 813-839 (LAKENEREGEKKEEEKEGEDKSQPKSI) are compositionally biased toward basic and acidic residues. Positions 840–851 (RERRRPREKRRS) are enriched in basic residues. Phosphoserine; by ROCK2 is present on serine 851. Residues serine 861 and serine 870 each carry the phosphoserine modification. Over residues 866–882 (QERQSDTEDGSSKRETQ) the composition is skewed to basic and acidic residues. A compositionally biased stretch (low complexity) spans 883–897 (TDSVSRYDSSSTSSS). Phosphoserine occurs at positions 902 and 907. Phosphoserine; by NUAK1 is present on serine 909. Residues 913–927 (LEDRKPYSSRLEKDD) are compositionally biased toward basic and acidic residues. The residue at position 994 (serine 994) is a Phosphoserine.

As to quaternary structure, PP1 comprises a catalytic subunit, PPP1CA, PPP1CB or PPP1CC, and one or several targeting or regulatory subunits. PPP1R12A mediates binding to myosin. Interacts with ARHA and CIT. Binds PPP1R12B, ROCK1 and IL16. Interacts directly with PRKG1. Non-covalent dimer of 2 dimers; PRKG1-PRKG1 and PPP1R12A-PPP1R12A. Interacts with SMTNL1. Interacts with PPP1CB; the interaction is direct. Interacts (when phosphorylated at Ser-445, Ser-472 and Ser-910) with 14-3-3. Interacts with ROCK1 and ROCK2. Interacts with isoform 1 and isoform 2 of ZIPK/DAPK3. Interacts with RAF1. Interacts with HIF1AN. Interacts with NCKAP1L. Post-translationally, phosphorylated by CIT (Rho-associated kinase). Phosphorylated cooperatively by ROCK1 and CDC42BP on Thr-694. Phosphorylated on upon DNA damage, probably by ATM or ATR. In vitro, phosphorylation of Ser-693 by PKA and PKG appears to prevent phosphorylation of the inhibitory site Thr-694, probably mediated by PRKG1. Phosphorylation at Ser-445, Ser-472 and Ser-909 by NUAK1 promotes interaction with 14-3-3, leading to inhibit interaction with myosin light chain MLC2, preventing dephosphorylation of MLC2. May be phosphorylated at Thr-694 by DMPK; may inhibit the myosin phosphatase activity. Phosphorylated at Ser-473 by CDK1 during mitosis, creating docking sites for the POLO box domains of PLK1. Subsequently, PLK1 binds and phosphorylates PPP1R12A. In terms of tissue distribution, expressed in striated and vascular smooth muscle, specificcally in type 2a fibers (at protein level). Expression levels are 20-30% higher in developed males than females (at protein level).

It is found in the cytoplasm. The protein localises to the cytoskeleton. Its subcellular location is the stress fiber. Key regulator of protein phosphatase 1C (PPP1C). Mediates binding to myosin. As part of the PPP1C complex, involved in dephosphorylation of PLK1. Capable of inhibiting HIF1AN-dependent suppression of HIF1A activity. The chain is Protein phosphatase 1 regulatory subunit 12A from Mus musculus (Mouse).